Reading from the N-terminus, the 940-residue chain is Isoleucine--tRNA ligase (940 aa).

The 'HIGH' region signature appears at proline 58–histidine 68. Glutamate 564 lines the L-isoleucyl-5'-AMP pocket. Positions lysine 605–serine 609 match the 'KMSKS' region motif. An ATP-binding site is contributed by lysine 608. Positions 903, 906, 923, and 926 each coordinate Zn(2+).

The protein belongs to the class-I aminoacyl-tRNA synthetase family. IleS type 1 subfamily. As to quaternary structure, monomer. Requires Zn(2+) as cofactor.

It localises to the cytoplasm. It catalyses the reaction tRNA(Ile) + L-isoleucine + ATP = L-isoleucyl-tRNA(Ile) + AMP + diphosphate. Catalyzes the attachment of isoleucine to tRNA(Ile). As IleRS can inadvertently accommodate and process structurally similar amino acids such as valine, to avoid such errors it has two additional distinct tRNA(Ile)-dependent editing activities. One activity is designated as 'pretransfer' editing and involves the hydrolysis of activated Val-AMP. The other activity is designated 'posttransfer' editing and involves deacylation of mischarged Val-tRNA(Ile). The protein is Isoleucine--tRNA ligase of Shewanella sediminis (strain HAW-EB3).